The chain runs to 192 residues: Ion-translocating oxidoreductase complex subunit B (192 aa).

The tract at residues 1–26 (MNAIWIAVAAVSLLGLAFGAILGYAS) is hydrophobic. Residues 32–91 (EDDPVVEKIDEILPQSQCGQCGYPGCRPYAEAISCNGEKINRCAPGGEAVMLKIAELLNV) form the 4Fe-4S domain. The [4Fe-4S] cluster site is built by Cys-49, Cys-52, Cys-57, Cys-74, Cys-117, Cys-120, Cys-123, Cys-127, Cys-147, Cys-150, Cys-153, and Cys-157. 4Fe-4S ferredoxin-type domains follow at residues 108–137 (MVAV…GATR) and 138–167 (VMHT…LQPV).

This sequence belongs to the 4Fe4S bacterial-type ferredoxin family. RnfB subfamily. As to quaternary structure, the complex is composed of six subunits: RsxA, RsxB, RsxC, RsxD, RsxE and RsxG. The cofactor is [4Fe-4S] cluster.

Its subcellular location is the cell inner membrane. Part of a membrane-bound complex that couples electron transfer with translocation of ions across the membrane. Required to maintain the reduced state of SoxR. In Shigella boydii serotype 4 (strain Sb227), this protein is Ion-translocating oxidoreductase complex subunit B.